A 488-amino-acid polypeptide reads, in one-letter code: NADH-quinone oxidoreductase subunit N 2 (488 aa).

Helical transmembrane passes span 18–38 (FLPE…ELFI), 45–65 (LVLN…LLIP), 81–101 (PLAV…LPFA), 110–130 (SFYG…FVLA), 135–155 (LIIL…LTAL), 169–189 (YLIL…FMYI), 210–230 (LVLG…AVPF), 242–262 (PTPV…IPLV), 274–294 (LVWT…GNLV), 308–328 (SSIA…VIGM), 331–351 (VIYF…VLAL), 375–395 (IAFA…TVGF), 412–434 (WLAF…LVVV), and 458–478 (FALT…WFLI).

It belongs to the complex I subunit 2 family. In terms of assembly, NDH-1 is composed of 14 different subunits. Subunits NuoA, H, J, K, L, M, N constitute the membrane sector of the complex.

The protein localises to the cell inner membrane. It catalyses the reaction a quinone + NADH + 5 H(+)(in) = a quinol + NAD(+) + 4 H(+)(out). Functionally, NDH-1 shuttles electrons from NADH, via FMN and iron-sulfur (Fe-S) centers, to quinones in the respiratory chain. The immediate electron acceptor for the enzyme in this species is believed to be ubiquinone. Couples the redox reaction to proton translocation (for every two electrons transferred, four hydrogen ions are translocated across the cytoplasmic membrane), and thus conserves the redox energy in a proton gradient. The sequence is that of NADH-quinone oxidoreductase subunit N 2 from Aquifex aeolicus (strain VF5).